Here is a 621-residue protein sequence, read N- to C-terminus: MSFDIAKYPTLALVPDPDDLRLLPKESLPTLCDELRQYLLNSVSRSSGHFASGLGAVELTVALHYVYQTPFDSLIWDVGHQAYPHKILTGRRDRIATIRQKGGLHPFPWRDESEYDTLSVGHSSTSISAGLGMAVAAEREGLGRRTVCVIGDGAMTAGMAFEAMNHAGDIKADMLVVLNDNEMSISENVGALNNHLAQLLSGKLYASLREGGKKMLSGLPPIKELVKRTEEHLKGMVVPGTLFEELGFNYIGPVDGHDVQALVATLKNMRDLKGPQLLHIMTKKGKGYAPAEKDPISWHAVPKFDPASGTLPKSSGTLPTYSKIFGDWLCETAHNDDRLMGITPAMREGSGMVRFSREYPQQYFDVAIAEQHAVTFGAGLAIGGYHPVVAIYSSFLQRAYDQVIHDVAIQRLPVLFAIDRGGIVGADGQTHQGAFDLSFLRCIPNLVIMTPSDENECRQMLQTGYEYREGPSAVRYPRGTGTGAPLTPPQALPIGKGVLRRRGERIAILNFGSLLPQALEAAERLNASVADMRFVKPLDDALVRSLAEQHEYLVTLEENAVMGGAGSGVNELLMQLRLPRPVLNIGLQDSFVPQGSQEEIRRDLQLDADGILAQLEGWLAR.

Residues H80 and 121–123 each bind thiamine diphosphate; that span reads GHS. A Mg(2+)-binding site is contributed by D152. Thiamine diphosphate is bound by residues 153–154, N181, Y288, and E370; that span reads GA. N181 is a binding site for Mg(2+).

Belongs to the transketolase family. DXPS subfamily. As to quaternary structure, homodimer. Requires Mg(2+) as cofactor. The cofactor is thiamine diphosphate.

It catalyses the reaction D-glyceraldehyde 3-phosphate + pyruvate + H(+) = 1-deoxy-D-xylulose 5-phosphate + CO2. It functions in the pathway metabolic intermediate biosynthesis; 1-deoxy-D-xylulose 5-phosphate biosynthesis; 1-deoxy-D-xylulose 5-phosphate from D-glyceraldehyde 3-phosphate and pyruvate: step 1/1. In terms of biological role, catalyzes the acyloin condensation reaction between C atoms 2 and 3 of pyruvate and glyceraldehyde 3-phosphate to yield 1-deoxy-D-xylulose-5-phosphate (DXP). This Edwardsiella ictaluri (strain 93-146) protein is 1-deoxy-D-xylulose-5-phosphate synthase.